The chain runs to 308 residues: Transcription initiation factor IIB (308 aa).

2 consecutive repeat copies span residues 124–207 and 218–299.

This sequence belongs to the TFIIB family.

Its function is as follows. Stabilizes TBP binding to an archaeal box-A promoter. Also responsible for recruiting RNA polymerase II to the pre-initiation complex (DNA-TBP-TFIIB). This Sulfurisphaera tokodaii (strain DSM 16993 / JCM 10545 / NBRC 100140 / 7) (Sulfolobus tokodaii) protein is Transcription initiation factor IIB.